The chain runs to 397 residues: Lysophospholipid transporter LplT (397 aa).

Residues 1–17 (MSESVHTNTSLWSKGMK) lie on the Periplasmic side of the membrane. A helical transmembrane segment spans residues 18 to 38 (AVIVAQFLSAFGDNALLFATL). Over 39 to 52 (ALLKAQFYPEWSQP) the chain is Cytoplasmic. A helical membrane pass occupies residues 53-73 (ILQMVFVGAYILFAPFVGQVA). The Periplasmic segment spans residues 74–90 (DSFAKGRVMMFANGLKL). A helical transmembrane segment spans residues 91–111 (LGAASICFGINPFLGYTLVGV). At 112 to 144 (GAAAYSPAKYGILGELTTGSKLVKANGLMEAST) the chain is on the cytoplasmic side. Residues 145 to 165 (IAAILLGSVAGGVLADWHVLV) form a helical membrane-spanning segment. Residue A166 is a topological domain, periplasmic. The chain crosses the membrane as a helical span at residues 167-187 (LAACALAYGGAVVANIYIPKL). The Cytoplasmic portion of the chain corresponds to 188 to 226 (AAARPGQSWNLINMTRSFLNACTSLWRNGETRFSLVGTS). A helical membrane pass occupies residues 227–247 (LFWGAGVTLRFLLVLWVPVAL). The Periplasmic segment spans residues 248–256 (GITDNATPT). The chain crosses the membrane as a helical span at residues 257–277 (YLNAMVAIGIVVGAGAAAKLV). Topologically, residues 278–280 (TLE) are cytoplasmic. The helical transmembrane segment at 281 to 301 (TVSRCMPAGILIGVVVLIFSL) threads the bilayer. Residues 302–304 (QHE) lie on the Periplasmic side of the membrane. The chain crosses the membrane as a helical span at residues 305-325 (LLPAYALLMLIGVMGGFFVVP). Over 326 to 343 (LNALLQERGKKSVGAGNA) the chain is Cytoplasmic. The helical transmembrane segment at 344-364 (IAVQNLGENSAMLLMLGIYSL) threads the bilayer. The Periplasmic portion of the chain corresponds to 365-366 (AV). Residues 367–387 (MVGIPVVPIGIGFGALFALAI) traverse the membrane as a helical segment. The Cytoplasmic portion of the chain corresponds to 388-397 (TALWIWQRRH).

It belongs to the major facilitator superfamily. LplT (TC 2.A.1.42) family.

It is found in the cell inner membrane. Catalyzes the facilitated diffusion of 2-acyl-glycero-3-phosphoethanolamine (2-acyl-GPE) into the cell. The polypeptide is Lysophospholipid transporter LplT (Escherichia coli (strain ATCC 8739 / DSM 1576 / NBRC 3972 / NCIMB 8545 / WDCM 00012 / Crooks)).